We begin with the raw amino-acid sequence, 342 residues long: Oxygen-dependent coproporphyrinogen-III oxidase (342 aa).

Ser98 serves as a coordination point for substrate. A divalent metal cation contacts are provided by His102 and His112. Residue His112 is the Proton donor of the active site. Position 114 to 116 (114 to 116 (NYR)) interacts with substrate. The a divalent metal cation site is built by His146 and His176. Positions 266-301 (YVEFNLVWDRGTIFGLQTNGRTESILMSLPPLARWE) are important for dimerization.

This sequence belongs to the aerobic coproporphyrinogen-III oxidase family. Homodimer. The cofactor is a divalent metal cation.

It localises to the cytoplasm. It carries out the reaction coproporphyrinogen III + O2 + 2 H(+) = protoporphyrinogen IX + 2 CO2 + 2 H2O. It participates in porphyrin-containing compound metabolism; protoporphyrin-IX biosynthesis; protoporphyrinogen-IX from coproporphyrinogen-III (O2 route): step 1/1. Its function is as follows. Involved in the heme and chlorophyll biosynthesis. Catalyzes the aerobic oxidative decarboxylation of propionate groups of rings A and B of coproporphyrinogen-III to yield the vinyl groups in protoporphyrinogen-IX. This is Oxygen-dependent coproporphyrinogen-III oxidase from Prochlorococcus marinus subsp. pastoris (strain CCMP1986 / NIES-2087 / MED4).